The sequence spans 234 residues: Large ribosomal subunit protein uL1c (234 aa).

The protein belongs to the universal ribosomal protein uL1 family. As to quaternary structure, part of the 50S ribosomal subunit.

It is found in the plastid. Its subcellular location is the chloroplast. Binds directly to 23S rRNA. Might be involved in E site tRNA release (Potential). The chain is Large ribosomal subunit protein uL1c (rpl1) from Rhodomonas salina (Cryptomonas salina).